We begin with the raw amino-acid sequence, 158 residues long: NAD(P)H-quinone oxidoreductase subunit N (158 aa).

Belongs to the complex I NdhN subunit family. NDH-1 can be composed of about 15 different subunits; different subcomplexes with different compositions have been identified which probably have different functions.

The protein localises to the cellular thylakoid membrane. The enzyme catalyses a plastoquinone + NADH + (n+1) H(+)(in) = a plastoquinol + NAD(+) + n H(+)(out). It catalyses the reaction a plastoquinone + NADPH + (n+1) H(+)(in) = a plastoquinol + NADP(+) + n H(+)(out). Functionally, NDH-1 shuttles electrons from an unknown electron donor, via FMN and iron-sulfur (Fe-S) centers, to quinones in the respiratory and/or the photosynthetic chain. The immediate electron acceptor for the enzyme in this species is believed to be plastoquinone. Couples the redox reaction to proton translocation, and thus conserves the redox energy in a proton gradient. Cyanobacterial NDH-1 also plays a role in inorganic carbon-concentration. In Rippkaea orientalis (strain PCC 8801 / RF-1) (Cyanothece sp. (strain PCC 8801)), this protein is NAD(P)H-quinone oxidoreductase subunit N.